The sequence spans 564 residues: Bifunctional sesquiterpene synthase 1 (564 aa).

Residues Asp317, Asp321, Asp461, and Glu469 each coordinate Mg(2+). Positions 317–321 (DDTFD) match the DDXXD motif motif.

This sequence belongs to the terpene synthase family. It depends on Mg(2+) as a cofactor.

It catalyses the reaction (2E,6E)-farnesyl diphosphate = alpha-copaene + diphosphate. It carries out the reaction (2E,6E)-farnesyl diphosphate = delta-cadinene + diphosphate. Its pathway is secondary metabolite biosynthesis; terpenoid biosynthesis. Its function is as follows. Sesquiterpene synthase converting farnesyl diphosphate to alpha copaene and delta-cadinene as the major products. The protein is Bifunctional sesquiterpene synthase 1 of Phyla dulcis (Aztec sweet herb).